The following is a 198-amino-acid chain: Superoxide dismutase [Fe] (198 aa).

Residues His-27, His-74, Asp-157, and His-161 each contribute to the Fe cation site.

The protein belongs to the iron/manganese superoxide dismutase family. In terms of assembly, homodimer. Fe cation is required as a cofactor.

It catalyses the reaction 2 superoxide + 2 H(+) = H2O2 + O2. In terms of biological role, destroys superoxide anion radicals which are normally produced within the cells and which are toxic to biological systems. This chain is Superoxide dismutase [Fe] (sodB), found in Pseudomonas putida (strain ATCC 47054 / DSM 6125 / CFBP 8728 / NCIMB 11950 / KT2440).